The sequence spans 341 residues: Adenine deaminase (341 aa).

The Zn(2+) site is built by histidine 17, histidine 19, and histidine 197. Glutamate 200 acts as the Proton donor in catalysis. A Zn(2+)-binding site is contributed by aspartate 278. Substrate is bound at residue aspartate 279.

The protein belongs to the metallo-dependent hydrolases superfamily. Adenosine and AMP deaminases family. Adenine deaminase type 2 subfamily. It depends on Zn(2+) as a cofactor.

The catalysed reaction is adenine + H2O + H(+) = hypoxanthine + NH4(+). Functionally, catalyzes the hydrolytic deamination of adenine to hypoxanthine. Plays an important role in the purine salvage pathway and in nitrogen catabolism. This is Adenine deaminase from Chlorobium luteolum (strain DSM 273 / BCRC 81028 / 2530) (Pelodictyon luteolum).